The following is a 337-amino-acid chain: Glyceraldehyde-3-phosphate dehydrogenase 2 (337 aa).

Residues 11–12 (RI), Asp35, Arg79, and Thr121 contribute to the NAD(+) site. D-glyceraldehyde 3-phosphate contacts are provided by residues 153–155 (SCT), Thr184, Arg199, 212–213 (TG), and Arg235. Cys154 serves as the catalytic Nucleophile. Position 317 (Asn317) interacts with NAD(+).

This sequence belongs to the glyceraldehyde-3-phosphate dehydrogenase family. As to quaternary structure, homotetramer.

Its subcellular location is the cytoplasm. It carries out the reaction D-glyceraldehyde 3-phosphate + phosphate + NADP(+) = (2R)-3-phospho-glyceroyl phosphate + NADPH + H(+). The enzyme catalyses D-glyceraldehyde 3-phosphate + phosphate + NAD(+) = (2R)-3-phospho-glyceroyl phosphate + NADH + H(+). Its pathway is carbohydrate degradation; glycolysis; pyruvate from D-glyceraldehyde 3-phosphate: step 1/5. In terms of biological role, involved in photosynthetic carbon assimilation. Catalyzes the NAD(P)-dependent oxidative phosphorylation of glyceraldehyde 3-phosphate (G3P) to 1,3-bisphosphoglycerate (BPG). The first reaction step involves the formation of a hemiacetal intermediate between G3P and a cysteine residue, and this hemiacetal intermediate is then oxidized to a thioester, with concomitant reduction of NAD to NADH. The reduced NADH is then exchanged with the second NAD, and the thioester is attacked by a nucleophilic inorganic phosphate to produce BPG. It can use both NADP and NAD. This chain is Glyceraldehyde-3-phosphate dehydrogenase 2 (gap2), found in Synechocystis sp. (strain ATCC 27184 / PCC 6803 / Kazusa).